The sequence spans 209 residues: Ribosomal RNA small subunit methyltransferase G (209 aa).

S-adenosyl-L-methionine-binding residues include Gly74, Phe79, and Arg139.

This sequence belongs to the methyltransferase superfamily. RNA methyltransferase RsmG family.

It localises to the cytoplasm. It catalyses the reaction guanosine(527) in 16S rRNA + S-adenosyl-L-methionine = N(7)-methylguanosine(527) in 16S rRNA + S-adenosyl-L-homocysteine. In terms of biological role, specifically methylates the N7 position of guanine in position 527 of 16S rRNA. This Halorhodospira halophila (strain DSM 244 / SL1) (Ectothiorhodospira halophila (strain DSM 244 / SL1)) protein is Ribosomal RNA small subunit methyltransferase G.